A 351-amino-acid polypeptide reads, in one-letter code: CCN family member 3 (351 aa).

Residues 1–21 (MSVFLRKQCLCLGFLLLHLLN) form the signal peptide. The IGFBP N-terminal domain maps to 25–99 (ATLRCPSRCP…NNETGICMVP (75 aa)). 6 disulfide bridges follow: Cys-29-Cys-55, Cys-33-Cys-57, Cys-37-Cys-58, Cys-44-Cys-61, Cys-69-Cys-83, and Cys-75-Cys-96. Asn-91 carries N-linked (GlcNAc...) asparagine glycosylation. Positions 102-168 (DNCVFDGVIY…GECCEKWTCG (67 aa)) constitute a VWFC domain. The region spanning 199-244 (NCIEQTTEWSACSKSCGMGLSTRVTNRNLQCEMVKQTRLCMVRPCE) is the TSP type-1 domain. Residue Cys-238 is the site of S-palmitoyl cysteine attachment. 5 disulfide bridges follow: Cys-258–Cys-295, Cys-275–Cys-309, Cys-286–Cys-325, Cys-289–Cys-327, and Cys-294–Cys-331. Residues 258-332 (CLRTKKSLKS…GTCTCHSNCP (75 aa)) form the CTCK domain. Asn-274 carries an N-linked (GlcNAc...) asparagine glycan.

Belongs to the CCN family. As to quaternary structure, interacts with FBLN1. Interacts (via CTCK domain) with NOTCH1 (via the EGF-like repeat region). Interacts with GJA1/CX43. Interacts with ITGA5:ITGB1, ITGAV:ITGB3 and ITGAV:ITGB5. Interacts with ZDHHC22; the interaction may lead to CCN3 palmitoylation. In terms of processing, may be palmitoylated on Cys-238, which is important for extracellular secretion. Widely expressed. Highly expressed in neurons of dorsal root ganglia and dorsal horn of the spinal cord (at protein level). Expressed in astrocytes (at protein level). In cartilage, dominantly expressed in the chondrocyte territorial matrix.

The protein localises to the secreted. It localises to the cytoplasm. It is found in the cell junction. The protein resides in the gap junction. Immediate-early protein playing a role in various cellular processes including proliferation, adhesion, migration, differentiation and survival. Acts by binding to integrins or membrane receptors such as NOTCH1. Essential regulator of hematopoietic stem and progenitor cell function. Inhibits myogenic differentiation through the activation of Notch-signaling pathway. Inhibits vascular smooth muscle cells proliferation by increasing expression of cell-cycle regulators such as CDKN2B or CDKN1A independently of TGFB1 signaling. Ligand of integrins ITGAV:ITGB3 and ITGA5:ITGB1, acts directly upon endothelial cells to stimulate pro-angiogenic activities and induces angiogenesis. In endothelial cells, supports cell adhesion, induces directed cell migration (chemotaxis) and promotes cell survival. Also plays a role in cutaneous wound healing acting as integrin receptor ligand. Supports skin fibroblast adhesion through ITGA5:ITGB1 and ITGA6:ITGB1 and induces fibroblast chemotaxis through ITGAV:ITGB5. Seems to enhance bFGF-induced DNA synthesis in fibroblasts. Involved in bone regeneration as a negative regulator. Enhances the articular chondrocytic phenotype, whereas it repressed the one representing endochondral ossification. Impairs pancreatic beta-cell function, inhibits beta-cell proliferation and insulin secretion. Plays a role as negative regulator of endothelial pro-inflammatory activation reducing monocyte adhesion, its anti-inflammatory effects occur secondary to the inhibition of NF-kappaB signaling pathway. Contributes to the control and coordination of inflammatory processes in atherosclerosis. Attenuates inflammatory pain through regulation of IL1B- and TNF-induced MMP9, MMP2 and CCL2 expression. Inhibits MMP9 expression through ITGB1 engagement. Brain osteoanabolic hormone. During lactation, maintains the maternal skeleton and viability of offspring. In Rattus norvegicus (Rat), this protein is CCN family member 3 (Ccn3).